We begin with the raw amino-acid sequence, 160 residues long: Ribosomal RNA large subunit methyltransferase H (160 aa).

S-adenosyl-L-methionine-binding residues include Leu-76 and Gly-108.

The protein belongs to the RNA methyltransferase RlmH family. Homodimer.

The protein localises to the cytoplasm. The catalysed reaction is pseudouridine(1915) in 23S rRNA + S-adenosyl-L-methionine = N(3)-methylpseudouridine(1915) in 23S rRNA + S-adenosyl-L-homocysteine + H(+). Its function is as follows. Specifically methylates the pseudouridine at position 1915 (m3Psi1915) in 23S rRNA. The chain is Ribosomal RNA large subunit methyltransferase H from Rhodopseudomonas palustris (strain ATCC BAA-98 / CGA009).